The sequence spans 320 residues: Acetaldehyde dehydrogenase 2 (320 aa).

C129 serves as the catalytic Acyl-thioester intermediate. Residues 160-168 (SAGPGTRAN) and N287 contribute to the NAD(+) site.

Belongs to the acetaldehyde dehydrogenase family.

The enzyme catalyses acetaldehyde + NAD(+) + CoA = acetyl-CoA + NADH + H(+). The chain is Acetaldehyde dehydrogenase 2 from Burkholderia cenocepacia (strain ATCC BAA-245 / DSM 16553 / LMG 16656 / NCTC 13227 / J2315 / CF5610) (Burkholderia cepacia (strain J2315)).